A 41-amino-acid chain; its full sequence is Photosystem I reaction center subunit IX (41 aa).

The helical transmembrane segment at 7 to 27 threads the bilayer; the sequence is YLSTVPVVFAIWLTFTAGLII.

This sequence belongs to the PsaJ family.

The protein localises to the plastid. It localises to the chloroplast thylakoid membrane. In terms of biological role, may help in the organization of the PsaE and PsaF subunits. The sequence is that of Photosystem I reaction center subunit IX from Bigelowiella natans (Pedinomonas minutissima).